The chain runs to 418 residues: Serine hydroxymethyltransferase (418 aa).

(6S)-5,6,7,8-tetrahydrofolate is bound by residues Leu-121 and 125–127 (GHL). Lys-230 carries the post-translational modification N6-(pyridoxal phosphate)lysine. Residue 356 to 358 (SPF) participates in (6S)-5,6,7,8-tetrahydrofolate binding.

It belongs to the SHMT family. As to quaternary structure, homodimer. Requires pyridoxal 5'-phosphate as cofactor.

It localises to the cytoplasm. The catalysed reaction is (6R)-5,10-methylene-5,6,7,8-tetrahydrofolate + glycine + H2O = (6S)-5,6,7,8-tetrahydrofolate + L-serine. It functions in the pathway one-carbon metabolism; tetrahydrofolate interconversion. The protein operates within amino-acid biosynthesis; glycine biosynthesis; glycine from L-serine: step 1/1. Catalyzes the reversible interconversion of serine and glycine with tetrahydrofolate (THF) serving as the one-carbon carrier. This reaction serves as the major source of one-carbon groups required for the biosynthesis of purines, thymidylate, methionine, and other important biomolecules. Also exhibits THF-independent aldolase activity toward beta-hydroxyamino acids, producing glycine and aldehydes, via a retro-aldol mechanism. The polypeptide is Serine hydroxymethyltransferase (Idiomarina loihiensis (strain ATCC BAA-735 / DSM 15497 / L2-TR)).